The primary structure comprises 136 residues: Histone H3 (136 aa).

A disordered region spans residues 1-45; that stretch reads MARTKQTARKSTGGKAPRKQLATKAARKSAPATGGVKKPHRYRPG. Lys5 is modified (N6,N6,N6-trimethyllysine; alternate). Lys5 is modified (N6,N6-dimethyllysine; alternate). N6-methyllysine; alternate occurs at positions 5 and 10. Lys10 bears the N6-acetyllysine; alternate mark. Ser11 carries the phosphoserine modification. Lys15 carries the post-translational modification N6,N6-dimethyllysine; alternate. 5 positions are modified to N6-methyllysine; alternate: Lys15, Lys19, Lys24, Lys28, and Lys37. N6-acetyllysine; alternate is present on residues Lys15, Lys19, Lys24, Lys28, and Lys37. Residues Lys28 and Lys37 each carry the N6,N6,N6-trimethyllysine; alternate modification. Lys28 and Lys37 each carry N6,N6-dimethyllysine; alternate. An N6-acetyllysine mark is found at Lys57 and Lys65. At Lys80 the chain carries N6,N6,N6-trimethyllysine; alternate. Position 80 is an N6,N6-dimethyllysine; alternate (Lys80). Lys80 carries the N6-methyllysine; alternate modification.

Belongs to the histone H3 family. As to quaternary structure, the nucleosome is a histone octamer containing two molecules each of H2A, H2B, H3 and H4 assembled in one H3-H4 heterotetramer and two H2A-H2B heterodimers. The octamer wraps approximately 147 bp of DNA. Post-translationally, phosphorylated to form H3S10ph. H3S10ph promotes subsequent H3K14ac formation and is required for transcriptional activation through TBP recruitment to the promoters. In terms of processing, mono-, di- and trimethylated by the COMPASS complex to form H3K4me1/2/3. H3K4me activates gene expression by regulating transcription elongation and plays a role in telomere length maintenance. H3K4me enrichment correlates with transcription levels, and occurs in a 5' to 3' gradient with H3K4me3 enrichment at the 5'-end of genes, shifting to H3K4me2 and then H3K4me1. Methylated by SET2 to form H3K36me. H3K36me represses gene expression. Methylated by DOT1 to form H3K79me. H3K79me is required for association of SIR proteins with telomeric regions and for telomeric silencing. The COMPASS-mediated formation of H3K4me2/3 and the DOT1-mediated formation of H3K79me require H2BK123ub1. Acetylation of histone H3 leads to transcriptional activation. H3K14ac formation by GCN5 is promoted by H3S10ph. H3K14ac can also be formed by ESA1. H3K56ac formation occurs predominantly in newly synthesized H3 molecules during G1, S and G2/M of the cell cycle and may be involved in DNA repair.

The protein localises to the nucleus. It is found in the chromosome. Functionally, core component of nucleosome. Nucleosomes wrap and compact DNA into chromatin, limiting DNA accessibility to the cellular machineries which require DNA as a template. Histones thereby play a central role in transcription regulation, DNA repair, DNA replication and chromosomal stability. DNA accessibility is regulated via a complex set of post-translational modifications of histones, also called histone code, and nucleosome remodeling. The protein is Histone H3 (H3.1) of Mortierella alpina (Oleaginous fungus).